A 79-amino-acid polypeptide reads, in one-letter code: Small ribosomal subunit protein bS18 (79 aa).

This sequence belongs to the bacterial ribosomal protein bS18 family. In terms of assembly, part of the 30S ribosomal subunit. Forms a tight heterodimer with protein bS6.

Functionally, binds as a heterodimer with protein bS6 to the central domain of the 16S rRNA, where it helps stabilize the platform of the 30S subunit. The polypeptide is Small ribosomal subunit protein bS18 (Rhodopseudomonas palustris (strain BisB18)).